A 30-amino-acid polypeptide reads, in one-letter code: Sillucin (30 aa).

Disulfide bonds link cysteine 2–cysteine 7, cysteine 12–cysteine 24, cysteine 13–cysteine 30, and cysteine 14–cysteine 21.

Its subcellular location is the secreted. Its function is as follows. Sillucin is an antimicrobial agent produced by the thermophilic fungus Rhizomucor pusillus in liquid culture; it is effective against Gram-positive bacteria at the level of RNA metabolism. The chain is Sillucin from Rhizomucor pusillus.